The primary structure comprises 292 residues: MTDMPSVTTPALDRYAVFGNPIGHSKSPFIHGQFASITQQPLSYEAILAPIDGFEASLRAFFQAGGKGANVTVPFKEQAFALCDSLSAEATLAGAVNTLSLLADGTIYGDNTDGLGLVADLIRHLGSLQHKRVLLVGAGGAARGCILPLLKAEVGQLVITNRTQSKAQALVEIFSQVQQGRYSDKLQSMPMPELSGEFDLVINSTSASLAGELPPLPQSIIGNKTACYDMMYGAKPTAFNQWAVQQDAAQVIDGLGMLVGQAAKSFALWRGVEPDTSGVLKLLRDKLQADAQ.

Residues 25-27 and T72 each bind shikimate; that span reads SKS. K76 (proton acceptor) is an active-site residue. Positions 97 and 113 each coordinate shikimate. NADP(+) is bound by residues 137–141, 161–166, and M230; these read GAGGA and NRTQSK. Residue Y232 participates in shikimate binding. G254 contributes to the NADP(+) binding site.

It belongs to the shikimate dehydrogenase family. As to quaternary structure, homodimer.

It catalyses the reaction shikimate + NADP(+) = 3-dehydroshikimate + NADPH + H(+). It functions in the pathway metabolic intermediate biosynthesis; chorismate biosynthesis; chorismate from D-erythrose 4-phosphate and phosphoenolpyruvate: step 4/7. Functionally, involved in the biosynthesis of the chorismate, which leads to the biosynthesis of aromatic amino acids. Catalyzes the reversible NADPH linked reduction of 3-dehydroshikimate (DHSA) to yield shikimate (SA). In Shewanella sp. (strain MR-7), this protein is Shikimate dehydrogenase (NADP(+)).